The sequence spans 493 residues: Cysteine--tRNA ligase (493 aa).

C29 lines the Zn(2+) pocket. The 'HIGH' region signature appears at 31 to 41; the sequence is VTVYDLSHIGH. Zn(2+) contacts are provided by C209, H234, and E238. The short motif at 266–270 is the 'KMSKS' region element; sequence KMSKS. K269 lines the ATP pocket.

This sequence belongs to the class-I aminoacyl-tRNA synthetase family. As to quaternary structure, monomer. It depends on Zn(2+) as a cofactor.

The protein resides in the cytoplasm. The catalysed reaction is tRNA(Cys) + L-cysteine + ATP = L-cysteinyl-tRNA(Cys) + AMP + diphosphate. This Syntrophobacter fumaroxidans (strain DSM 10017 / MPOB) protein is Cysteine--tRNA ligase.